The sequence spans 381 residues: 3-isopropylmalate dehydrogenase (381 aa).

The substrate site is built by Arg-104, Arg-114, Arg-142, and Asp-232. Residues Asp-232, Asp-256, and Asp-260 each coordinate Mg(2+). Gly-290–Asn-302 provides a ligand contact to NAD(+).

The protein belongs to the isocitrate and isopropylmalate dehydrogenases family. LeuB type 1 subfamily. As to quaternary structure, homodimer. The cofactor is Mg(2+). Requires Mn(2+) as cofactor.

The protein localises to the cytoplasm. It catalyses the reaction (2R,3S)-3-isopropylmalate + NAD(+) = 4-methyl-2-oxopentanoate + CO2 + NADH. Its pathway is amino-acid biosynthesis; L-leucine biosynthesis; L-leucine from 3-methyl-2-oxobutanoate: step 3/4. In terms of biological role, catalyzes the oxidation of 3-carboxy-2-hydroxy-4-methylpentanoate (3-isopropylmalate) to 3-carboxy-4-methyl-2-oxopentanoate. The product decarboxylates to 4-methyl-2 oxopentanoate. In Synechococcus sp. (strain JA-3-3Ab) (Cyanobacteria bacterium Yellowstone A-Prime), this protein is 3-isopropylmalate dehydrogenase.